A 104-amino-acid polypeptide reads, in one-letter code: DNA-directed RNA polymerase subunit omega (104 aa).

Residues 76 to 104 (IEEEKRRKEEEEKKIKEQIAKEKEDGEKI) form a disordered region.

This sequence belongs to the RNA polymerase subunit omega family. The RNAP catalytic core consists of 2 alpha, 1 beta, 1 beta' and 1 omega subunit. When a sigma factor is associated with the core the holoenzyme is formed, which can initiate transcription.

It catalyses the reaction RNA(n) + a ribonucleoside 5'-triphosphate = RNA(n+1) + diphosphate. Functionally, promotes RNA polymerase assembly. Latches the N- and C-terminal regions of the beta' subunit thereby facilitating its interaction with the beta and alpha subunits. This is DNA-directed RNA polymerase subunit omega from Streptococcus pneumoniae (strain CGSP14).